The following is a 336-amino-acid chain: tRNA N6-adenosine threonylcarbamoyltransferase (336 aa).

Positions 115, 119, and 136 each coordinate Fe cation. Substrate is bound by residues 136–140, aspartate 168, glutamate 185, and serine 266; that span reads YVAGG. Aspartate 294 lines the Fe cation pocket.

The protein belongs to the KAE1 / TsaD family. Requires Fe(2+) as cofactor.

Its subcellular location is the cytoplasm. The catalysed reaction is L-threonylcarbamoyladenylate + adenosine(37) in tRNA = N(6)-L-threonylcarbamoyladenosine(37) in tRNA + AMP + H(+). Functionally, required for the formation of a threonylcarbamoyl group on adenosine at position 37 (t(6)A37) in tRNAs that read codons beginning with adenine. Is probably involved in the transfer of the threonylcarbamoyl moiety of threonylcarbamoyl-AMP (TC-AMP) to the N6 group of A37. This Thermofilum pendens (strain DSM 2475 / Hrk 5) protein is tRNA N6-adenosine threonylcarbamoyltransferase.